Consider the following 357-residue polypeptide: Membrane-bound lytic murein transglycosylase C (357 aa).

Residues 1–15 (MKKYLLLALLPFLYA) form the signal peptide. Cysteine 16 is lipidated: N-palmitoyl cysteine. Cysteine 16 is lipidated: S-diacylglycerol cysteine.

This sequence belongs to the transglycosylase Slt family.

Its subcellular location is the cell outer membrane. The enzyme catalyses Exolytic cleavage of the (1-&gt;4)-beta-glycosidic linkage between N-acetylmuramic acid (MurNAc) and N-acetylglucosamine (GlcNAc) residues in peptidoglycan, from either the reducing or the non-reducing ends of the peptidoglycan chains, with concomitant formation of a 1,6-anhydrobond in the MurNAc residue.. Its function is as follows. Murein-degrading enzyme. May play a role in recycling of muropeptides during cell elongation and/or cell division. This Haemophilus influenzae (strain 86-028NP) protein is Membrane-bound lytic murein transglycosylase C.